A 115-amino-acid chain; its full sequence is Large ribosomal subunit protein P2 (115 aa).

Methionine 1 is subject to N-acetylmethionine. 2 positions are modified to phosphoserine: serine 17 and serine 19. N6-acetyllysine; alternate is present on lysine 21. N6-succinyllysine; alternate is present on lysine 21. A compositionally biased stretch (low complexity) spans 69–90; sequence GAXAVAAAPGSXAPAAGSAPAA. A disordered region spans residues 69–115; it reads GAXAVAAAPGSXAPAAGSAPAAAEEKKEEKKEESEESDDDMGFGLFD. Residues serine 79 and serine 86 each carry the phosphoserine modification. Residues 91 to 101 are compositionally biased toward basic and acidic residues; the sequence is AEEKKEEKKEE. A phosphoserine mark is found at serine 102 and serine 105.

It belongs to the eukaryotic ribosomal protein P1/P2 family. As to quaternary structure, heterodimer with RPLP1 at the lateral ribosomal stalk of the large ribosomal subunit.

Its function is as follows. Plays an important role in the elongation step of protein synthesis. The chain is Large ribosomal subunit protein P2 (RPLP2) from Sus scrofa (Pig).